The chain runs to 125 residues: Small ribosomal subunit protein uS13 (125 aa).

Positions 95-125 (GLPVNGQRTRTNARTRKGVKKTVANKKKATK) are disordered. The span at 105–125 (TNARTRKGVKKTVANKKKATK) shows a compositional bias: basic residues.

It belongs to the universal ribosomal protein uS13 family. In terms of assembly, part of the 30S ribosomal subunit. Forms a loose heterodimer with protein S19. Forms two bridges to the 50S subunit in the 70S ribosome.

Its function is as follows. Located at the top of the head of the 30S subunit, it contacts several helices of the 16S rRNA. In the 70S ribosome it contacts the 23S rRNA (bridge B1a) and protein L5 of the 50S subunit (bridge B1b), connecting the 2 subunits; these bridges are implicated in subunit movement. Contacts the tRNAs in the A and P-sites. In Leptospira biflexa serovar Patoc (strain Patoc 1 / Ames), this protein is Small ribosomal subunit protein uS13.